We begin with the raw amino-acid sequence, 313 residues long: Putative S-adenosyl-L-methionine-dependent methyltransferase MUL_0706 (313 aa).

S-adenosyl-L-methionine-binding positions include Asp-132 and 161–162 (DL).

This sequence belongs to the UPF0677 family.

Functionally, exhibits S-adenosyl-L-methionine-dependent methyltransferase activity. The chain is Putative S-adenosyl-L-methionine-dependent methyltransferase MUL_0706 from Mycobacterium ulcerans (strain Agy99).